The primary structure comprises 70 residues: Putative antitoxin VapB34 (70 aa).

Functionally, antitoxin component of a possible type II toxin-antitoxin (TA) system. The cognate toxin is VapC34. The sequence is that of Putative antitoxin VapB34 (vapB34) from Mycobacterium tuberculosis (strain CDC 1551 / Oshkosh).